Reading from the N-terminus, the 107-residue chain is Acidic phospholipase A2 2 (107 aa).

Disulfide bonds link Cys26/Cys100, Cys28/Cys38, Cys37/Cys82, Cys43/Cys107, Cys44/Cys75, and Cys62/Cys73. Residues Tyr27, Gly29, and Gly31 each contribute to the Ca(2+) site. His41 is a catalytic residue. Asp42 contacts Ca(2+). Residue Asp76 is part of the active site.

It depends on Ca(2+) as a cofactor. In terms of tissue distribution, expressed by the venom gland.

It localises to the secreted. The enzyme catalyses a 1,2-diacyl-sn-glycero-3-phosphocholine + H2O = a 1-acyl-sn-glycero-3-phosphocholine + a fatty acid + H(+). PLA2 catalyzes the calcium-dependent hydrolysis of the 2-acyl groups in 3-sn-phosphoglycerides. The chain is Acidic phospholipase A2 2 from Bothrops insularis (Golden lancehead).